Consider the following 601-residue polypeptide: 4-hydroxy-3-methylbut-2-en-1-yl diphosphate synthase (flavodoxin) (601 aa).

[4Fe-4S] cluster is bound by residues Cys-507, Cys-510, Cys-542, and Glu-549.

It belongs to the IspG family. Requires [4Fe-4S] cluster as cofactor.

The enzyme catalyses (2E)-4-hydroxy-3-methylbut-2-enyl diphosphate + oxidized [flavodoxin] + H2O + 2 H(+) = 2-C-methyl-D-erythritol 2,4-cyclic diphosphate + reduced [flavodoxin]. Its pathway is isoprenoid biosynthesis; isopentenyl diphosphate biosynthesis via DXP pathway; isopentenyl diphosphate from 1-deoxy-D-xylulose 5-phosphate: step 5/6. In terms of biological role, converts 2C-methyl-D-erythritol 2,4-cyclodiphosphate (ME-2,4cPP) into 1-hydroxy-2-methyl-2-(E)-butenyl 4-diphosphate. This is 4-hydroxy-3-methylbut-2-en-1-yl diphosphate synthase (flavodoxin) from Chlamydia muridarum (strain MoPn / Nigg).